The chain runs to 302 residues: Sulfate adenylyltransferase subunit 2 (302 aa).

The protein belongs to the PAPS reductase family. CysD subfamily. Heterodimer composed of CysD, the smaller subunit, and CysN.

The catalysed reaction is sulfate + ATP + H(+) = adenosine 5'-phosphosulfate + diphosphate. Its pathway is sulfur metabolism; hydrogen sulfide biosynthesis; sulfite from sulfate: step 1/3. With CysN forms the ATP sulfurylase (ATPS) that catalyzes the adenylation of sulfate producing adenosine 5'-phosphosulfate (APS) and diphosphate, the first enzymatic step in sulfur assimilation pathway. APS synthesis involves the formation of a high-energy phosphoric-sulfuric acid anhydride bond driven by GTP hydrolysis by CysN coupled to ATP hydrolysis by CysD. The chain is Sulfate adenylyltransferase subunit 2 from Xanthomonas euvesicatoria pv. vesicatoria (strain 85-10) (Xanthomonas campestris pv. vesicatoria).